A 1229-amino-acid chain; its full sequence is Vacuolar protein sorting-associated protein 8 homolog (1229 aa).

The disordered stretch occupies residues 67 to 89 (EFGMPVPHATPTPSIGEDSTIRT). A CHCR repeat occupies 901–1063 (ETTRLLSLHY…ILPHQELQSI (163 aa)). The RING-type; atypical zinc-finger motif lies at 1148 to 1189 (CSMCRQRLYDHSQVLIFGGCGHGIHEQCMEESETQFEECPRC).

This sequence belongs to the VPS8 family. In terms of assembly, component of the class C core vacuole/endosome tethering (CORVET) complex composed of at least Vps8, dor/Vps18, car/Vps33A and Vps16A; unlike in other species, Vps11 is not part of the Drosophila complex. Due to the reduced number of components the Drosophila CORVET complex is often referred to as the miniCORVET complex. Has a higher affinity than the homotypic fusion and vacuole protein sorting (HOPS) tethering complex-specific component lt/Vps41 for Vps16A, car/Vps33A and dor/Vps18, the core components shared by both tethering complexes.

It is found in the early endosome. Functionally, part of the class C core vacuole/endosome tethering (CORVET) complex involved in endo-lysosomal vesicle trafficking and lysosome biogenesis by facilitating docking and fusion of endosomal vesicles. The CORVET complex acts upstream of the homotypic fusion and vacuole protein sorting (HOPS) tethering complex but is not involved in autophagic flux. The CORVET complex may cooperate with the early endosomal tether Rbsn-5 to mediate endosomal fusion. As part of the CORVET complex recruited to endosomes by activated GTP-bound Rab5. Specifically required for endocytic trafficking in a subset of cells, such as hemocytes and nephrocytes, which are highly active in endocytosis. This chain is Vacuolar protein sorting-associated protein 8 homolog, found in Drosophila melanogaster (Fruit fly).